The chain runs to 435 residues: D-amino acid dehydrogenase (435 aa).

3–17 (VIVLGGGVLGVSTAW) provides a ligand contact to FAD.

Belongs to the DadA oxidoreductase family. FAD serves as cofactor.

The catalysed reaction is a D-alpha-amino acid + A + H2O = a 2-oxocarboxylate + AH2 + NH4(+). It functions in the pathway amino-acid degradation; D-alanine degradation; NH(3) and pyruvate from D-alanine: step 1/1. In terms of biological role, oxidative deamination of D-amino acids. This chain is D-amino acid dehydrogenase, found in Chromobacterium violaceum (strain ATCC 12472 / DSM 30191 / JCM 1249 / CCUG 213 / NBRC 12614 / NCIMB 9131 / NCTC 9757 / MK).